The chain runs to 201 residues: Ras-related protein Rab-1B (201 aa).

At M1 the chain carries N-acetylmethionine. The GTP site is built by S17, G18, V19, G20, K21, S22, C23, Y33, T34, E35, S36, S39, and T40. S22 lines the Mg(2+) pocket. A Switch 1 motif is present at residues 30-45 (DDTYTESYISTIGVDF). The Mg(2+) site is built by T40 and D63. Residues 64–83 (TAGQERFRTITSSYYRGAHG) are switch 2 region; Required for interaction with REP1/CHM. The Switch 2 motif lies at 65–80 (AGQERFRTITSSYYRG). Residues G66, N121, K122, D124, S151, A152, and K153 each coordinate GTP. Residues 173 to 201 (MGPGAASGGERPNLKIDSTPVKQAGGGCC) form a disordered region. 2 S-geranylgeranyl cysteine lipidation sites follow: C200 and C201. The residue at position 201 (C201) is a Cysteine methyl ester.

The protein belongs to the small GTPase superfamily. Rab family. As to quaternary structure, interacts with MICAL1 and MICAL2. Interacts (in GTP-bound form) with MICALCL, MICAL1 and MILCAL3. Interacts with GDI1; the interaction requires the GDP-bound state. Interacts with CHM/REP1; the interaction requires the GDP-bound form and is necessary for prenylation by GGTase II. Interacts with RabGAP TBC1D20. Interacts (in GDP-bound form) with lipid phosphatase MTMR6 (via GRAM domain); the interaction regulates MTMR6 recruitment to the endoplasmic reticulum-Golgi intermediate compartment. Interacts (in GDP-bound form) with lipid phosphatase MTMR7. Mg(2+) is required as a cofactor. Prenylated; by GGTase II, only after interaction of the substrate with Rab escort protein 1 (REP1).

The protein localises to the cytoplasm. It localises to the membrane. Its subcellular location is the preautophagosomal structure membrane. It is found in the perinuclear region. The enzyme catalyses GTP + H2O = GDP + phosphate + H(+). With respect to regulation, regulated by guanine nucleotide exchange factors (GEFs) which promote the exchange of bound GDP for free GTP. Regulated by GTPase activating proteins (GAPs) including TBC1D20 which increases the GTP hydrolysis activity. Inhibited by GDP dissociation inhibitors (GDIs). The small GTPases Rab are key regulators of intracellular membrane trafficking, from the formation of transport vesicles to their fusion with membranes. Rabs cycle between an inactive GDP-bound form and an active GTP-bound form that is able to recruit to membranes different set of downstream effectors directly responsible for vesicle formation, movement, tethering and fusion. Plays a role in the initial events of the autophagic vacuole development which take place at specialized regions of the endoplasmic reticulum. Regulates vesicular transport between the endoplasmic reticulum and successive Golgi compartments. Required to modulate the compacted morphology of the Golgi. Promotes the recruitment of lipid phosphatase MTMR6 to the endoplasmic reticulum-Golgi intermediate compartment. The polypeptide is Ras-related protein Rab-1B (RAB1B) (Bos taurus (Bovine)).